The sequence spans 145 residues: Mannitol-specific phosphotransferase enzyme IIA component (145 aa).

A PTS EIIA type-2 domain is found at P4–V144. Catalysis depends on H64, which acts as the Tele-phosphohistidine intermediate. A Phosphohistidine; by HPr modification is found at H64.

The protein localises to the cytoplasm. The phosphoenolpyruvate-dependent sugar phosphotransferase system (sugar PTS), a major carbohydrate active transport system, catalyzes the phosphorylation of incoming sugar substrates concomitantly with their translocation across the cell membrane. The enzyme II CmtAB PTS system is involved in D-mannitol transport. This is Mannitol-specific phosphotransferase enzyme IIA component from Geobacillus stearothermophilus (Bacillus stearothermophilus).